Consider the following 76-residue polypeptide: Zinc finger protein 706 (76 aa).

Over residues 1–13 the composition is skewed to low complexity; that stretch reads MARGQQKIQSQQK. 2 disordered regions span residues 1–32 and 53–76; these read MARGQQKIQSQQKNAKKQAGQKKKQGHDQKAA and TFKQHFESKHPKTPLPPELADVQA. Residues 14–25 show a composition bias toward basic residues; the sequence is NAKKQAGQKKKQ. A C2H2-type zinc finger spans residues 39–62; it reads YTCTVCRTQMPDPKTFKQHFESKH. The segment covering 53–62 has biased composition (basic and acidic residues); the sequence is TFKQHFESKH.

It localises to the cytoplasm. It is found in the nucleus. Functionally, transcription repressor involved in the exit of embryonic stem cells (ESCs) from self-renewal. Acts by repressing expression of KLF4. This chain is Zinc finger protein 706, found in Homo sapiens (Human).